The chain runs to 240 residues: NDR1/HIN1-like protein 2 (240 aa).

The chain crosses the membrane as a helical span at residues 57–77 (NILIAVAVILGVAALILWLIF). Residues Asn109, Asn141, Asn151, and Asn223 are each glycosylated (N-linked (GlcNAc...) asparagine).

In terms of tissue distribution, expressed at low levels in roots, rosette leaves, cauline leaves, stems, flowers and siliques.

Its subcellular location is the cell membrane. Its function is as follows. May play a role in plant immunity. The chain is NDR1/HIN1-like protein 2 from Arabidopsis thaliana (Mouse-ear cress).